Consider the following 348-residue polypeptide: Dihydroorotase (348 aa).

Zn(2+) is bound by residues H17 and H19. Substrate contacts are provided by residues 19 to 21 and N45; that span reads HLR. Residues K103, H140, and H178 each contribute to the Zn(2+) site. At K103 the chain carries N6-carboxylysine. H140 serves as a coordination point for substrate. Position 223 (L223) interacts with substrate. D251 is a binding site for Zn(2+). D251 is an active-site residue. 2 residues coordinate substrate: H255 and A267.

Belongs to the metallo-dependent hydrolases superfamily. DHOase family. Class II DHOase subfamily. In terms of assembly, homodimer. Requires Zn(2+) as cofactor.

It catalyses the reaction (S)-dihydroorotate + H2O = N-carbamoyl-L-aspartate + H(+). Its pathway is pyrimidine metabolism; UMP biosynthesis via de novo pathway; (S)-dihydroorotate from bicarbonate: step 3/3. Functionally, catalyzes the reversible cyclization of carbamoyl aspartate to dihydroorotate. The polypeptide is Dihydroorotase (Escherichia coli O139:H28 (strain E24377A / ETEC)).